Consider the following 309-residue polypeptide: Pantothenate kinase (309 aa).

92–99 (GSVAVGKT) contributes to the ATP binding site.

The protein belongs to the prokaryotic pantothenate kinase family.

It localises to the cytoplasm. It catalyses the reaction (R)-pantothenate + ATP = (R)-4'-phosphopantothenate + ADP + H(+). Its pathway is cofactor biosynthesis; coenzyme A biosynthesis; CoA from (R)-pantothenate: step 1/5. The protein is Pantothenate kinase (coaA) of Lactiplantibacillus plantarum (strain ATCC BAA-793 / NCIMB 8826 / WCFS1) (Lactobacillus plantarum).